The chain runs to 120 residues: uncharacterized protein (120 aa).

Residues 90–120 (SLASRGGHMTQSGQCHVSGSLLGRGHKSRGR) form a disordered region.

This is an uncharacterized protein from Homo sapiens (Human).